Consider the following 975-residue polypeptide: Cation-chloride cotransporter 1 (975 aa).

Disordered regions lie at residues 1 to 29 and 104 to 124; these read MDSG…SKYR and EQIQ…TQGH. At 1–132 the chain is on the cytoplasmic side; it reads MDSGDIEEAG…GHPKPPALKM (132 aa). Residues 133 to 153 form a helical membrane-spanning segment; the sequence is GTMMGVFVPCLQNILGIIYYI. The Extracellular segment spans residues 154 to 167; the sequence is RFTWIVGMAGIGQG. Residues 168–188 form a helical membrane-spanning segment; sequence LVLVFLCGLCTFLTTISLSAI. At 189 to 214 the chain is on the cytoplasmic side; the sequence is ATNGAMKGGGPYYLIGRALGPEVGIS. Residues 215–235 traverse the membrane as a helical segment; the sequence is IGLCFFLGNAVAGALYVLGAV. The Extracellular segment spans residues 236–273; sequence ETFLKAFPAAGIFRETITKVNGTAVSESIQSPNSHDLQ. A glycan (N-linked (GlcNAc...) asparagine) is linked at Asn256. The helical transmembrane segment at 274-294 threads the bilayer; it reads VYGIVVTILLCFIVFGGVKMI. Over 295 to 296 the chain is Cytoplasmic; that stretch reads NR. The chain crosses the membrane as a helical span at residues 297 to 317; it reads VAPAFLVPVLLSIFCIFIGIF. The Extracellular portion of the chain corresponds to 318–359; the sequence is LAKTDDPDNGITGLRLKSFKDNWGSAYQMTNDAGIPDPTGGT. The chain crosses the membrane as a helical span at residues 360 to 380; it reads YWSFNELVGLFFPAVTGIMAG. Residues 381 to 398 lie on the Cytoplasmic side of the membrane; the sequence is SNRSASLKDTQKSIPVGT. A helical transmembrane segment spans residues 399-419; that stretch reads LAATLTTTSLYLISVLFFGAV. Over 420–434 the chain is Extracellular; sequence ATRDKLLTDRLLTAT. The helical transmembrane segment at 435-455 threads the bilayer; the sequence is IAWPFPAIVHVGIILSTLGAA. The Cytoplasmic portion of the chain corresponds to 456 to 490; sequence LQSLTGAPRLLAAIANDDILPILNYFKVADTSEPH. The chain crosses the membrane as a helical span at residues 491-511; sequence IATLFTAFICIGCVVIGNLDL. Over 512–515 the chain is Extracellular; it reads ITPT. A helical membrane pass occupies residues 516–536; the sequence is VTMFYLLCYSGVNLSCFLLDL. At 537-544 the chain is on the cytoplasmic side; it reads LDAPSWRP. The helical transmembrane segment at 545 to 565 threads the bilayer; it reads RWKYHHWSLSFVGASLCIVIM. Topologically, residues 566–571 are extracellular; it reads FLISWS. A helical transmembrane segment spans residues 572-592; that stretch reads FTVVAIALASLIYKYVGLKGK. The Cytoplasmic portion of the chain corresponds to 593 to 975; the sequence is AGDWGDGFKS…YHRDVVTLFT (383 aa).

It belongs to the SLC12A transporter family. As to expression, expressed in young seedlings cotyledon tips, plant vasculature, root tips and axillary buds. Expressed in root vascular strand in the pericycle and other parenchyma cells bordering xylem vessels. Expressed in the xylem/symplast boundaries of rosette stems, rosette leaves and cauline leaves. Expressed in stipules, trichomes and hydathodes. Expressed in pollen grains.

It localises to the membrane. Functionally, cation/chloride cotransporter that mediates potassium-chloride and sodium-chloride cotransports. Involved in plant development and Cl(-) homeostasis. May be involved in long distance Cl(-) transport. Does not function as an H(+)-dependent cotransporter. This is Cation-chloride cotransporter 1 (CCC1) from Arabidopsis thaliana (Mouse-ear cress).